A 360-amino-acid polypeptide reads, in one-letter code: Squamosa promoter-binding-like protein 7 (360 aa).

A compositionally biased stretch (gly residues) spans A74 to A89. Residues A74–A98 form a disordered region. The SBP-type zinc-finger motif lies at V105–S182. 8 residues coordinate Zn(2+): C108, C113, C130, H133, C149, C152, H156, and C168. The Bipartite nuclear localization signal signature appears at K165 to R181. Basic residues predominate over residues L172–S182. 3 disordered regions span residues L172–H196, F261–Q306, and T318–V360.

Expressed in young panicles.

It localises to the nucleus. Trans-acting factor that binds specifically to the consensus nucleotide sequence 5'-TNCGTACAA-3'. May be involved in panicle development. The sequence is that of Squamosa promoter-binding-like protein 7 (SPL7) from Oryza sativa subsp. japonica (Rice).